A 156-amino-acid polypeptide reads, in one-letter code: Ribosome-binding factor A (156 aa).

The segment covering 125–138 (RVREGAKHAGDPDP) has biased composition (basic and acidic residues). The segment at 125-156 (RVREGAKHAGDPDPYRVGGAEDTDGDTDGDER) is disordered. A compositionally biased stretch (acidic residues) spans 145–156 (EDTDGDTDGDER).

Belongs to the RbfA family. In terms of assembly, monomer. Binds 30S ribosomal subunits, but not 50S ribosomal subunits or 70S ribosomes.

It localises to the cytoplasm. Functionally, one of several proteins that assist in the late maturation steps of the functional core of the 30S ribosomal subunit. Associates with free 30S ribosomal subunits (but not with 30S subunits that are part of 70S ribosomes or polysomes). Required for efficient processing of 16S rRNA. May interact with the 5'-terminal helix region of 16S rRNA. This Mycolicibacterium smegmatis (strain ATCC 700084 / mc(2)155) (Mycobacterium smegmatis) protein is Ribosome-binding factor A.